The chain runs to 610 residues: MSIMGLLSSEQLNQLKLVLDTLSKNQLIWLSGYLLGLVNSQTSTDIGVTASGVSAGLELKPDLIDNTIIVISASQTGNARNIAKQLYSDLVEAGLRAVLFSAGEYKFKKISEISLLIFITSTHGEGEPPEEALALYKYLFSEKALRMEKTSFIVLSLGDRSYEYFAKAGKDFDKRFEDLGANRLYDRVDLDVDFQSEVDKWKEKVVSLCKSKIVSIVSKDKCINIQNNIVFKKKNPVTSYCKEFPLIAYLLNRQKITSCNSLKDVHHLEFDISGSGLCYQPGDALGIWYENDYNLVYELLELLNLTGRESVQIKNQSMCLDEALVKYCDLTQNTPVVVKSIATISQDKILLNLLQNQNQLNSFCSTTPIVEMFYQISMTKQLSSQELIQILRPMRPRFYSIASAQSEVGEEIHITVSVVRYTINGRIRSGGASSYLVDRVQDHDEIRIFVESNDNFRLPKDPNVSIIMIGAGTGIAPFRSFMQQRALDKALGKNWLFFGNLKFTDDFLYQIEWKTYFKSGILNKIDTAWSRDQDYKVYVQDKLLSNGLELWDWIQKGAYIYVCGDAKYMARDVEQALVTVVSIHGNMNMDQSNDFWNEMRVQHRYQRDIY.

The region spanning 68-206 is the Flavodoxin-like domain; sequence IIVISASQTG…EVDKWKEKVV (139 aa). FMN contacts are provided by residues 74–79, 121–124, and 157–166; these read SQTGNA, STHG, and LGDRSYEYFA. Residues 243–459 enclose the FAD-binding FR-type domain; sequence EFPLIAYLLN…VESNDNFRLP (217 aa). FAD contacts are provided by residues Thr331, Ser365, 397–400, 415–417, Tyr421, and 430–433; these read RFYS, TVS, and GGAS. NADP(+) is bound by residues 530 to 531, 536 to 540, and Asp572; these read SR and KVYVQ. Tyr610 provides a ligand contact to FAD.

Belongs to the NADPH-dependent sulphite reductase flavoprotein subunit CysJ family. The protein in the N-terminal section; belongs to the flavodoxin family. It in the C-terminal section; belongs to the flavoprotein pyridine nucleotide cytochrome reductase family. Alpha(8)-beta(8). The alpha component is a flavoprotein, the beta component is a hemoprotein. The cofactor is FAD. It depends on FMN as a cofactor.

It carries out the reaction hydrogen sulfide + 3 NADP(+) + 3 H2O = sulfite + 3 NADPH + 4 H(+). It participates in sulfur metabolism; hydrogen sulfide biosynthesis; hydrogen sulfide from sulfite (NADPH route): step 1/1. Functionally, component of the sulfite reductase complex that catalyzes the 6-electron reduction of sulfite to sulfide. This is one of several activities required for the biosynthesis of L-cysteine from sulfate. The flavoprotein component catalyzes the electron flow from NADPH -&gt; FAD -&gt; FMN to the hemoprotein component. The protein is Sulfite reductase [NADPH] flavoprotein alpha-component of Blochmanniella floridana.